The chain runs to 673 residues: Potassium-transporting ATPase ATP-binding subunit (673 aa).

Helical transmembrane passes span 34–54, 65–85, 216–236, and 253–273; these read IMFV…YPDL, VFSI…SEAL, IALF…ILTM, and IALA…AIGI. Catalysis depends on aspartate 304, which acts as the 4-aspartylphosphate intermediate. Residues aspartate 341, glutamate 345, 370–377, and lysine 388 each bind ATP; that span reads FTAETRMS. Mg(2+) is bound by residues aspartate 511 and aspartate 515. Transmembrane regions (helical) follow at residues 581 to 601, 609 to 629, and 649 to 669; these read FAIL…LNIM, AVLS…PIAM, and VYGL…DLII.

The protein belongs to the cation transport ATPase (P-type) (TC 3.A.3) family. Type IA subfamily. The system is composed of three essential subunits: KdpA, KdpB and KdpC.

Its subcellular location is the cell membrane. It carries out the reaction K(+)(out) + ATP + H2O = K(+)(in) + ADP + phosphate + H(+). Functionally, part of the high-affinity ATP-driven potassium transport (or Kdp) system, which catalyzes the hydrolysis of ATP coupled with the electrogenic transport of potassium into the cytoplasm. This subunit is responsible for energy coupling to the transport system and for the release of the potassium ions to the cytoplasm. The sequence is that of Potassium-transporting ATPase ATP-binding subunit from Staphylococcus epidermidis (strain ATCC 35984 / DSM 28319 / BCRC 17069 / CCUG 31568 / BM 3577 / RP62A).